The following is a 154-amino-acid chain: MAKEGIKLIANNKKARFDYFIEETYEAGVVLHGTEVKSLRMGKCSIKESFMRIENGEVYVYNMHISPYEKGNIFNKDPLRVKKLLLHKFQINKIVGQIQQKGYTLVPLTIYLKDSLVKMEIGVARGKKLYDKRQDIAKKDQKREAEKDFKVKNL.

Belongs to the SmpB family.

The protein localises to the cytoplasm. Required for rescue of stalled ribosomes mediated by trans-translation. Binds to transfer-messenger RNA (tmRNA), required for stable association of tmRNA with ribosomes. tmRNA and SmpB together mimic tRNA shape, replacing the anticodon stem-loop with SmpB. tmRNA is encoded by the ssrA gene; the 2 termini fold to resemble tRNA(Ala) and it encodes a 'tag peptide', a short internal open reading frame. During trans-translation Ala-aminoacylated tmRNA acts like a tRNA, entering the A-site of stalled ribosomes, displacing the stalled mRNA. The ribosome then switches to translate the ORF on the tmRNA; the nascent peptide is terminated with the 'tag peptide' encoded by the tmRNA and targeted for degradation. The ribosome is freed to recommence translation, which seems to be the essential function of trans-translation. This chain is SsrA-binding protein, found in Lachnoclostridium phytofermentans (strain ATCC 700394 / DSM 18823 / ISDg) (Clostridium phytofermentans).